The following is a 117-amino-acid chain: Holo-[acyl-carrier-protein] synthase (117 aa).

Positions 6 and 55 each coordinate Mg(2+).

It belongs to the P-Pant transferase superfamily. AcpS family. Mg(2+) serves as cofactor.

The protein localises to the cytoplasm. It carries out the reaction apo-[ACP] + CoA = holo-[ACP] + adenosine 3',5'-bisphosphate + H(+). In terms of biological role, transfers the 4'-phosphopantetheine moiety from coenzyme A to a Ser of acyl-carrier-protein. This Chlorobaculum tepidum (strain ATCC 49652 / DSM 12025 / NBRC 103806 / TLS) (Chlorobium tepidum) protein is Holo-[acyl-carrier-protein] synthase.